We begin with the raw amino-acid sequence, 245 residues long: DNA repair protein RecO (245 aa).

This sequence belongs to the RecO family.

Functionally, involved in DNA repair and RecF pathway recombination. The protein is DNA repair protein RecO of Anaplasma phagocytophilum (strain HZ).